A 282-amino-acid polypeptide reads, in one-letter code: Pantothenate synthetase (282 aa).

Residue 30 to 37 (MGYLHEGH) participates in ATP binding. His37 serves as the catalytic Proton donor. Residue Gln61 participates in (R)-pantoate binding. A beta-alanine-binding site is contributed by Gln61. 148 to 151 (GQKD) lines the ATP pocket. Residue Gln154 participates in (R)-pantoate binding. ATP contacts are provided by residues Val177 and 185-188 (MSSR).

It belongs to the pantothenate synthetase family. As to quaternary structure, homodimer.

The protein localises to the cytoplasm. It carries out the reaction (R)-pantoate + beta-alanine + ATP = (R)-pantothenate + AMP + diphosphate + H(+). It participates in cofactor biosynthesis; (R)-pantothenate biosynthesis; (R)-pantothenate from (R)-pantoate and beta-alanine: step 1/1. Functionally, catalyzes the condensation of pantoate with beta-alanine in an ATP-dependent reaction via a pantoyl-adenylate intermediate. The sequence is that of Pantothenate synthetase from Syntrophomonas wolfei subsp. wolfei (strain DSM 2245B / Goettingen).